We begin with the raw amino-acid sequence, 158 residues long: D-aminoacyl-tRNA deacylase (158 aa).

Residues 138 to 139 (GP) carry the Gly-cisPro motif, important for rejection of L-amino acids motif.

This sequence belongs to the DTD family. As to quaternary structure, homodimer.

Its subcellular location is the cytoplasm. The catalysed reaction is glycyl-tRNA(Ala) + H2O = tRNA(Ala) + glycine + H(+). The enzyme catalyses a D-aminoacyl-tRNA + H2O = a tRNA + a D-alpha-amino acid + H(+). Functionally, an aminoacyl-tRNA editing enzyme that deacylates mischarged D-aminoacyl-tRNAs. Hydrolyzes correctly charged, achiral, glycyl-tRNA(Gly). Deacylates mischarged endogenous and E.coli glycyl-tRNA(Ala), protecting cells against glycine mischarging by AlaRS. Acts via tRNA-based rather than protein-based catalysis; rejects L-amino acids rather than detecting D-amino acids in the active site. By recycling D-aminoacyl-tRNA to D-amino acids and free tRNA molecules, this enzyme counteracts the toxicity associated with the formation of D-aminoacyl-tRNA entities in vivo and helps enforce protein L-homochirality. The protein is D-aminoacyl-tRNA deacylase of Drosophila melanogaster (Fruit fly).